The following is a 383-amino-acid chain: Ribosomal RNA large subunit methyltransferase G (383 aa).

Belongs to the methyltransferase superfamily. RlmG family.

The protein localises to the cytoplasm. It carries out the reaction guanosine(1835) in 23S rRNA + S-adenosyl-L-methionine = N(2)-methylguanosine(1835) in 23S rRNA + S-adenosyl-L-homocysteine + H(+). Its function is as follows. Specifically methylates the guanine in position 1835 (m2G1835) of 23S rRNA. In Vibrio atlanticus (strain LGP32) (Vibrio splendidus (strain Mel32)), this protein is Ribosomal RNA large subunit methyltransferase G.